The following is a 371-amino-acid chain: Gamma-tocopherol methyltransferase, chloroplastic (371 aa).

Residues 1-65 constitute a chloroplast transit peptide; that stretch reads MAAAPVFFPS…NSNRIASRLQ (65 aa). Positions 153–162 are SAM motif I; that stretch reads IVDVGCGIGG. Residues 216-224 form an SAM motif II region; the sequence is GQFDLVWSM. Positions 243-252 are SAM motif III; sequence VAAPGATIII.

Belongs to the class I-like SAM-binding methyltransferase superfamily. gTMT family. As to quaternary structure, homodimer.

It is found in the plastid. The protein localises to the chloroplast inner membrane. It catalyses the reaction picrinine + S-adenosyl-L-methionine = ervincine + S-adenosyl-L-homocysteine + H(+). It participates in alkaloid biosynthesis; vindoline biosynthesis. Functionally, S-adenosyl-L-methionine-dependent N-methyltransferase involved in the biosynthesis of biologically active monoterpenoid indole alkaloids (MIAs) natural products including vindoline. Inactive with picrinine as substrate. The sequence is that of Gamma-tocopherol methyltransferase, chloroplastic from Catharanthus roseus (Madagascar periwinkle).